A 255-amino-acid chain; its full sequence is Enkurin (255 aa).

The span at 1–10 (MDSPCTSESI) shows a compositional bias: polar residues. 2 disordered regions span residues 1-25 (MDSP…PQHP) and 67-96 (SKEK…DHPV). Basic residues predominate over residues 73-83 (PPKKKFNRCSP). The SH3-binding signature appears at 83 to 89 (PKKPAVP). One can recognise an Enkurin domain in the interval 160–252 (KRNEDVKKAQ…VIEKHKIIYI (93 aa)). The segment at 160-255 (KRNEDVKKAQ…KHKIIYIANK (96 aa)) is interaction with TRPC proteins. The IQ domain maps to 176 to 187 (IQENLKKAAMKR).

As to quaternary structure, microtubule inner protein component of sperm flagellar doublet microtubules. Binds calmodulin via its IQ domain. Interacts with TRPC1, TRPC2, TRPC5, but not TRPC3. Interacts with CFAP45. High expression in testis and vomeronasal organ and lower expression in ovary, heart, lung, and brain. Not expressed in other tissues.

The protein resides in the cytoplasm. The protein localises to the cytoskeleton. It localises to the cilium axoneme. Its subcellular location is the flagellum axoneme. Its function is as follows. Adapter that functions to localize a calcium-sensitive signal transduction machinery in sperm to a calcium-permeable ion channel. Microtubule inner protein (MIP) part of the dynein-decorated doublet microtubules (DMTs) in cilia axoneme, which is required for motile cilia beating. In Mus musculus (Mouse), this protein is Enkurin (Enkur).